We begin with the raw amino-acid sequence, 207 residues long: Inhibitor of hydrogen peroxide resistance (207 aa).

A DNA-binding region (H-T-H motif) is located at residues 163–182 (MNYIHQRTRVSRSVVAEVLA).

This sequence belongs to the IprA family.

Its function is as follows. Involved in oxidative stress resistance. The polypeptide is Inhibitor of hydrogen peroxide resistance (Salmonella typhimurium (strain LT2 / SGSC1412 / ATCC 700720)).